We begin with the raw amino-acid sequence, 298 residues long: Tritrans,polycis-undecaprenyl-diphosphate synthase (geranylgeranyl-diphosphate specific) (298 aa).

The active site involves Asp35. Asp35 serves as a coordination point for Mg(2+). Substrate is bound by residues 36–39, Arg48, His52, and 80–82; these read GNRR and STE. The active-site Proton acceptor is Asn83. Residues Phe84, Arg86, Arg208, and 214 to 216 each bind substrate; that span reads RIS.

The protein belongs to the UPP synthase family. Homodimer. Mg(2+) serves as cofactor.

The enzyme catalyses geranylgeranyl diphosphate + 7 isopentenyl diphosphate = tri-trans,hepta-cis-undecaprenyl diphosphate + 7 diphosphate. Catalyzes the sequential condensation of isopentenyl diphosphate (IPP) with geranylgeranyl diphosphate (GGPP) to yield (2Z,6Z,10Z,14Z,18Z,22Z,26Z,30E,34E,38E)-undecaprenyl diphosphate (tritrans,heptacis-UPP). It is probably the precursor of glycosyl carrier lipids. This is Tritrans,polycis-undecaprenyl-diphosphate synthase (geranylgeranyl-diphosphate specific) from Methanosarcina mazei (strain ATCC BAA-159 / DSM 3647 / Goe1 / Go1 / JCM 11833 / OCM 88) (Methanosarcina frisia).